Here is a 200-residue protein sequence, read N- to C-terminus: MARYTGPSWKVSRRLGISLSGTGKELERRPYAPGQHGPTQRKKISEYGLQQAEKQKLRHMYGLTERQFKNTFNKAGKLRGKHGENFMILLEQRLDNIVYRLGLARTRRAARQLVNHGHITVDGKRVDIPSYQVSVGQVISVREKSAKNSAIAESLEVSSFVPEYVTFDAEKLTGSLNRLPERSELAAEINEAFIVEFYSR.

Residues 22–43 (TGKELERRPYAPGQHGPTQRKK) are disordered. An S4 RNA-binding domain is found at 92–170 (QRLDNIVYRL…VPEYVTFDAE (79 aa)).

Belongs to the universal ribosomal protein uS4 family. In terms of assembly, part of the 30S ribosomal subunit. Contacts protein S5. The interaction surface between S4 and S5 is involved in control of translational fidelity.

Functionally, one of the primary rRNA binding proteins, it binds directly to 16S rRNA where it nucleates assembly of the body of the 30S subunit. In terms of biological role, with S5 and S12 plays an important role in translational accuracy. This is Small ribosomal subunit protein uS4 from Listeria monocytogenes serovar 1/2a (strain ATCC BAA-679 / EGD-e).